A 357-amino-acid polypeptide reads, in one-letter code: Mitogen-activated protein kinase HOG1 (357 aa).

The Protein kinase domain maps to 20 to 299 (YSDLQPVGMG…ATEALSHDYL (280 aa)). Residues 26 to 34 (VGMGAFGLV) and Lys49 contribute to the ATP site. The Proton acceptor role is filled by Asp141. Thr171 is subject to Phosphothreonine. The TXY signature appears at 171–173 (TGY). Tyr173 bears the Phosphotyrosine mark.

It belongs to the protein kinase superfamily. Ser/Thr protein kinase family. MAP kinase subfamily. HOG1 sub-subfamily. It depends on Mg(2+) as a cofactor. Post-translationally, dually phosphorylated on Thr-171 and Tyr-173, which activates the enzyme.

It is found in the cytoplasm. The protein localises to the nucleus. The enzyme catalyses L-seryl-[protein] + ATP = O-phospho-L-seryl-[protein] + ADP + H(+). The catalysed reaction is L-threonyl-[protein] + ATP = O-phospho-L-threonyl-[protein] + ADP + H(+). With respect to regulation, activated by tyrosine and threonine phosphorylation. In terms of biological role, proline-directed serine/threonine-protein kinase involved in a signal transduction pathway that is activated by changes in the osmolarity of the extracellular environment. Controls osmotic regulation of transcription of target genes. The chain is Mitogen-activated protein kinase HOG1 (HOG1) from Colletotrichum orbiculare (strain 104-T / ATCC 96160 / CBS 514.97 / LARS 414 / MAFF 240422) (Cucumber anthracnose fungus).